Reading from the N-terminus, the 328-residue chain is Global transcription regulator sge1 (328 aa).

2 disordered regions span residues Pro-94 to Arg-120 and Gln-251 to His-293. Low complexity-rich tracts occupy residues Lys-106 to Lys-116, Gln-251 to Leu-261, and Ala-282 to His-293.

This sequence belongs to the MIT1/WOR1 family.

It is found in the nucleus. Global transcriptional regulator of transcription that impacts, but is not absolutely required for secondary metabolism and pathogenicity on maize. Regulates synthesis of multiple secondary metabolites, including fumonisins and fusarins. This is Global transcription regulator sge1 from Gibberella moniliformis (strain M3125 / FGSC 7600) (Maize ear and stalk rot fungus).